Here is a 173-residue protein sequence, read N- to C-terminus: Ribosome maturation factor RimP (173 aa).

The protein belongs to the RimP family.

Its subcellular location is the cytoplasm. Required for maturation of 30S ribosomal subunits. In Pelodictyon phaeoclathratiforme (strain DSM 5477 / BU-1), this protein is Ribosome maturation factor RimP.